Here is a 354-residue protein sequence, read N- to C-terminus: Uroporphyrinogen decarboxylase (354 aa).

Substrate-binding positions include 27-31 (RQAGR), Asp77, Tyr154, Ser209, and His327.

Belongs to the uroporphyrinogen decarboxylase family. Homodimer.

Its subcellular location is the cytoplasm. It catalyses the reaction uroporphyrinogen III + 4 H(+) = coproporphyrinogen III + 4 CO2. It functions in the pathway porphyrin-containing compound metabolism; protoporphyrin-IX biosynthesis; coproporphyrinogen-III from 5-aminolevulinate: step 4/4. In terms of biological role, catalyzes the decarboxylation of four acetate groups of uroporphyrinogen-III to yield coproporphyrinogen-III. The polypeptide is Uroporphyrinogen decarboxylase (Shewanella halifaxensis (strain HAW-EB4)).